We begin with the raw amino-acid sequence, 1249 residues long: MEEVITIAQIVHRGTDILSLNNEEIEALVDEIRSTLKGSNDIKNIRLIDFLFTLKDFVNHVRAEQSKLPNLSMPMEAYIRQLLVNPDVIPIVSEKKKELRVRPSTRKEIFLINGTHLAVPAEVPIEIYGLKLRLKTFSPQCFMRMAEIGSFLPETLGYVASGANLTNFIRVFMKCVDQETWKKNGEGIVVTTKENIIQFTHQYIELYKFLRSGGHSWLINRLAEEMVHRKLDREDQGSHISSVIETEEIEPEENIKRVIFFLKELSTMYSVFPVFTSGYMPLLYDLYRAGYLEVLWNPVEQKFLQHAEQREKEQMILQQVDMKLTEVTTQARQYFKIMEEKIGRVQSDAIREILTMEGKVDDPNSILQEVIKACGKQEAELITTEYLNIKKQWELQEKNACAHLKLVKQLRSGLQYAESLKVLESIRVLYKEKNNTTNWNLCKACGFKLLCPHVDMLIQLQAAEASYDTMRTKLMKFSGINKEKENNQGLIYSYFCKICGEELAHFVQEDRTADVGVIGDLNSKLRIFIWQETMKACTFIHFGKLVDVKQFANIAVNVCLPLIYNIENIKKEEDYDPLTQLYAVIYIYAYILNLIYSSQKNKEFLTITIHGMKADSSLNAYVTFLLEKMTQQYSGIINQLSEITDQWIANNFREAFKKIIHQNGLQGLSVQDDTKVLLTEILLDPLYDYAATVARIDGSIPMHKPQTPKEAEYEFKTVIGRTPTELLSQKEFYDKIYTFKYRPDFTQLARLNDIYFQEESLRVWWGGRDEEKISTLIYLKAYELFLKYLQNAPNFNLELAEFKKYENAYGEQRALLAQQGFYNIFDPNTGRADQRTRLFEYKKLPISTLYDEKGLPHKWTIYVYKAIDSSQKPAEIEVSRKDVIKKIDNHYALADLRCSVCHVLQHEVGQLNIKKVQTALKASLEFNTFYAFYESRCPKGGLHDFQDKKCVKCGLFTYIIYDHLSQPELVHDYYNNYKDQYDKEKMSIHSIQMKKDIAVPSAETQPEPQQEPWTFDYGKIIKTAKILDISPAVIEAIGAMEGRSYADIKEGQGAPPPPTSMDDPRLMAVDSAVRIFLYNYNCLRHISTFNKPPMYIERLVKHLSYEEKEDLEKVLPNVVNEYHTTFKQLRVTDPASALLYSIEFLCISFLTLYEIKEPSWVVNIIREFALTELNTIIQSEKLLSKPGAFNFMIFGEDFVCSGEDSSMDDISAYSSPGLFGEDIIDQLDDPFSIEDVDISLDVLDNLAPQ.

The protein belongs to the asfivirus M1249L family. As to quaternary structure, interacts with the minor capsid protein p17 and with the hexon capsid protein p72 capsomers; these interactions form a rigid zipper structure that stabilizes the capsomers. Interacts with host IRF3.

The protein resides in the virion. It localises to the host cytoplasm. Its function is as follows. Together with the penton and the other minor capsid proteins (p17, p49), forms a complicated network immediately below the outer capsid shell, stabilizing the whole capsid. In addition, blocks IFN-beta transactivation mediated by the cGAS-STING pathway and regulates the transcriptional activity of IFN-beta. Mechanistically, suppresses the phosphorylation of host key adapter protein TBK1 and degrades host IRF3 in the cytoplasm. This is Minor capsid protein M1249L from African swine fever virus (isolate Tick/Malawi/Lil 20-1/1983) (ASFV).